The primary structure comprises 399 residues: Probable dual-specificity RNA methyltransferase RlmN (399 aa).

The Proton acceptor role is filled by Glu102. The region spanning 108 to 385 (YLDRATVCVS…CTVRVERGVA (278 aa)) is the Radical SAM core domain. An intrachain disulfide couples Cys115 to Cys390. Cys122, Cys126, and Cys129 together coordinate [4Fe-4S] cluster. Residues 207-208 (GE), Ser239, 262-264 (SLH), and Asn347 contribute to the S-adenosyl-L-methionine site. Residue Cys390 is the S-methylcysteine intermediate of the active site.

The protein belongs to the radical SAM superfamily. RlmN family. It depends on [4Fe-4S] cluster as a cofactor.

The protein localises to the cytoplasm. It catalyses the reaction adenosine(2503) in 23S rRNA + 2 reduced [2Fe-2S]-[ferredoxin] + 2 S-adenosyl-L-methionine = 2-methyladenosine(2503) in 23S rRNA + 5'-deoxyadenosine + L-methionine + 2 oxidized [2Fe-2S]-[ferredoxin] + S-adenosyl-L-homocysteine. The enzyme catalyses adenosine(37) in tRNA + 2 reduced [2Fe-2S]-[ferredoxin] + 2 S-adenosyl-L-methionine = 2-methyladenosine(37) in tRNA + 5'-deoxyadenosine + L-methionine + 2 oxidized [2Fe-2S]-[ferredoxin] + S-adenosyl-L-homocysteine. Specifically methylates position 2 of adenine 2503 in 23S rRNA and position 2 of adenine 37 in tRNAs. The polypeptide is Probable dual-specificity RNA methyltransferase RlmN (Roseiflexus castenholzii (strain DSM 13941 / HLO8)).